Reading from the N-terminus, the 217-residue chain is Proteasome subunit beta type-9 (217 aa).

The propeptide at 1 to 18 is removed in mature form; that stretch reads MLGEEAEPQWISEEVKTG. The Nucleophile role is filled by Thr19.

It belongs to the peptidase T1B family. As to quaternary structure, the 26S proteasome consists of a 20S proteasome core and two 19S regulatory subunits. The 20S proteasome core is composed of 28 subunits that are arranged in four stacked rings, resulting in a barrel-shaped structure. The two end rings are each formed by seven alpha subunits, and the two central rings are each formed by seven beta subunits. The catalytic chamber with the active sites is on the inside of the barrel. Component of the immunoproteasome, where it displaces the equivalent housekeeping subunit PSMB6. Autocleaved. The resulting N-terminal Thr residue of the mature subunit is responsible for the nucleophile proteolytic activity.

It is found in the cytoplasm. Its subcellular location is the nucleus. It carries out the reaction Cleavage of peptide bonds with very broad specificity.. In terms of biological role, the proteasome is a multicatalytic proteinase complex which is characterized by its ability to cleave peptides with Arg, Phe, Tyr, Leu, and Glu adjacent to the leaving group at neutral or slightly basic pH. The proteasome has an ATP-dependent proteolytic activity. This subunit is involved in antigen processing to generate class I binding peptides. The sequence is that of Proteasome subunit beta type-9 (psmb9) from Oryzias latipes (Japanese rice fish).